The chain runs to 345 residues: S-adenosylmethionine:tRNA ribosyltransferase-isomerase (345 aa).

Belongs to the QueA family. Monomer.

The protein localises to the cytoplasm. The catalysed reaction is 7-aminomethyl-7-carbaguanosine(34) in tRNA + S-adenosyl-L-methionine = epoxyqueuosine(34) in tRNA + adenine + L-methionine + 2 H(+). Its pathway is tRNA modification; tRNA-queuosine biosynthesis. Transfers and isomerizes the ribose moiety from AdoMet to the 7-aminomethyl group of 7-deazaguanine (preQ1-tRNA) to give epoxyqueuosine (oQ-tRNA). This Finegoldia magna (strain ATCC 29328 / DSM 20472 / WAL 2508) (Peptostreptococcus magnus) protein is S-adenosylmethionine:tRNA ribosyltransferase-isomerase.